Consider the following 498-residue polypeptide: MMVAWWSLFLYGLQVAAPALAATPADWRSQSIYFLLTDRFARTDGSTTATCNTADQKYCGGTWQGIIDKLDYIQGMGFTAIWITPVTAQLPQTTAYGDAYHGYWQQDIYSLNENYGTADDLKALSSALHERGMYLMVDVVANHMGYDGAGSSVDYSVFKPFSSQDYFHPFCFIQNYEDQTQVEDCWLGDNTVSLPDLDTTKDVVKNEWYDWVGSLVSNYSIDGLRIDTVKHVQKDFWPGYNKAAGVYCIGEVLDGDPAYTCPYQNVMDGVLNYPIYYPLLNAFKSTSGSMDDLYNMINTVKSDCPDSTLLGTFVENHDNPRFASYTNDIALAKNVAAFIILNDGIPIIYAGQEQHYAGGNDPANREATWLSGYPTDSELYKLIASRNAIRNYAISKDTGFVTYKNWPIYKDDTTIPMRKGTDGSQIVTILSNKGASGDSYTLSLSGAGYTAGQQLTEVIGCTTVTVGSDGNVPVPMAGGLPRVLYPTEKLAGSKICYG.

Residues 1–21 (MMVAWWSLFLYGLQVAAPALA) form the signal peptide. A disulfide bridge links Cys-51 with Cys-59. Substrate contacts are provided by Gln-56 and Trp-104. Residue Asn-142 participates in Ca(2+) binding. His-143 contributes to the substrate binding site. A disulfide bond links Cys-171 and Cys-185. Ca(2+) is bound by residues Glu-183 and Asp-196. N-linked (GlcNAc...) asparagine glycosylation occurs at Asn-218. Position 225 (Arg-225) interacts with substrate. The Ca(2+) site is built by Asp-227, His-231, and Glu-251. The active-site Nucleophile is Asp-227. 230-231 (KH) lines the substrate pocket. Glu-251 functions as the Proton donor in the catalytic mechanism. Gly-255 serves as a coordination point for substrate. Residues Cys-261 and Cys-304 are joined by a disulfide bond. Substrate is bound by residues Asp-318 and Arg-365. Cys-461 and Cys-496 are disulfide-bonded.

This sequence belongs to the glycosyl hydrolase 13 family. The cofactor is Ca(2+).

The enzyme catalyses Endohydrolysis of (1-&gt;4)-alpha-D-glucosidic linkages in polysaccharides containing three or more (1-&gt;4)-alpha-linked D-glucose units.. The chain is Alpha-amylase A (amyA) from Aspergillus awamori (Black koji mold).